We begin with the raw amino-acid sequence, 369 residues long: Anhydro-N-acetylmuramic acid kinase (369 aa).

12–19 (GTSMDGVD) serves as a coordination point for ATP.

The protein belongs to the anhydro-N-acetylmuramic acid kinase family.

The catalysed reaction is 1,6-anhydro-N-acetyl-beta-muramate + ATP + H2O = N-acetyl-D-muramate 6-phosphate + ADP + H(+). It participates in amino-sugar metabolism; 1,6-anhydro-N-acetylmuramate degradation. Its pathway is cell wall biogenesis; peptidoglycan recycling. In terms of biological role, catalyzes the specific phosphorylation of 1,6-anhydro-N-acetylmuramic acid (anhMurNAc) with the simultaneous cleavage of the 1,6-anhydro ring, generating MurNAc-6-P. Is required for the utilization of anhMurNAc either imported from the medium or derived from its own cell wall murein, and thus plays a role in cell wall recycling. This is Anhydro-N-acetylmuramic acid kinase from Shewanella loihica (strain ATCC BAA-1088 / PV-4).